The chain runs to 287 residues: Phosphate transport system permease protein PstA (287 aa).

Helical transmembrane passes span 22–42, 70–90, 115–135, 138–158, 187–207, and 255–275; these read ISCI…WTLI, AFFG…PLGI, ILLS…YVMH, GHFS…PIVV, IIQV…LLAL, and LLAW…SLGA. The ABC transmembrane type-1 domain occupies 71-275; it reads FFGSAIMCLL…VFVLLVSLGA (205 aa).

Belongs to the binding-protein-dependent transport system permease family. CysTW subfamily.

It localises to the cell inner membrane. Its function is as follows. Part of a binding-protein-dependent transport system for phosphate; probably responsible for the translocation of the substrate across the membrane. The sequence is that of Phosphate transport system permease protein PstA (pstA) from Xylella fastidiosa (strain 9a5c).